Consider the following 240-residue polypeptide: U1 small nuclear ribonucleoprotein C (240 aa).

The segment at 4 to 36 (YYCEYCDIYLTHSSPVGRRQHIQGRKHISAKIE) adopts a Matrin-type zinc-finger fold. 2 disordered regions span residues 86–122 (GMKH…SKYH) and 175–240 (IDSD…SVDA). Basic and acidic residues-rich tracts occupy residues 178–194 (DPVK…DNAI) and 203–219 (DQGD…HADH). Residues 226–240 (TDGTANGNDQVSVDA) show a composition bias toward polar residues.

It belongs to the U1 small nuclear ribonucleoprotein C family. As to quaternary structure, U1 snRNP is composed of the 7 core Sm proteins B/B', D1, D2, D3, E, F and G that assemble in a heptameric protein ring on the Sm site of the small nuclear RNA to form the core snRNP, and at least 3 U1 snRNP-specific proteins U1-70K, U1-A and U1-C. U1-C interacts with U1 snRNA and the 5' splice-site region of the pre-mRNA.

It localises to the nucleus. Component of the spliceosomal U1 snRNP, which is essential for recognition of the pre-mRNA 5' splice-site and the subsequent assembly of the spliceosome. U1-C is directly involved in initial 5' splice-site recognition for both constitutive and regulated alternative splicing. The interaction with the 5' splice-site seems to precede base-pairing between the pre-mRNA and the U1 snRNA. Stimulates commitment or early (E) complex formation by stabilizing the base pairing of the 5' end of the U1 snRNA and the 5' splice-site region. This chain is U1 small nuclear ribonucleoprotein C, found in Plasmodium vivax (strain Salvador I).